Here is a 480-residue protein sequence, read N- to C-terminus: Glycogen synthase (480 aa).

Belongs to the glycosyltransferase 1 family. Bacterial/plant glycogen synthase subfamily.

It carries out the reaction [(1-&gt;4)-alpha-D-glucosyl](n) + ADP-alpha-D-glucose = [(1-&gt;4)-alpha-D-glucosyl](n+1) + ADP + H(+). Its pathway is glycan biosynthesis; glycogen biosynthesis. Functionally, synthesizes alpha-1,4-glucan chains using ADP-glucose. This Rhizobium etli (strain ATCC 51251 / DSM 11541 / JCM 21823 / NBRC 15573 / CFN 42) protein is Glycogen synthase.